The following is a 117-amino-acid chain: Small ribosomal subunit protein bS6 (117 aa).

The interval 97 to 117 is disordered; sequence TEEPSAILTKKDDRRGRRERN.

The protein belongs to the bacterial ribosomal protein bS6 family.

In terms of biological role, binds together with bS18 to 16S ribosomal RNA. The polypeptide is Small ribosomal subunit protein bS6 (Maricaulis maris (strain MCS10) (Caulobacter maris)).